The chain runs to 273 residues: 4-hydroxy-tetrahydrodipicolinate reductase (273 aa).

Residues 12-17 (GAGGRM) and E38 contribute to the NAD(+) site. R39 serves as a coordination point for NADP(+). NAD(+) contacts are provided by residues 102-104 (GTT) and 126-129 (AANF). The Proton donor/acceptor role is filled by H159. H160 contributes to the (S)-2,3,4,5-tetrahydrodipicolinate binding site. The active-site Proton donor is K163. Residue 169 to 170 (GT) participates in (S)-2,3,4,5-tetrahydrodipicolinate binding.

The protein belongs to the DapB family. As to quaternary structure, homotetramer.

The protein localises to the cytoplasm. The catalysed reaction is (S)-2,3,4,5-tetrahydrodipicolinate + NAD(+) + H2O = (2S,4S)-4-hydroxy-2,3,4,5-tetrahydrodipicolinate + NADH + H(+). It carries out the reaction (S)-2,3,4,5-tetrahydrodipicolinate + NADP(+) + H2O = (2S,4S)-4-hydroxy-2,3,4,5-tetrahydrodipicolinate + NADPH + H(+). It functions in the pathway amino-acid biosynthesis; L-lysine biosynthesis via DAP pathway; (S)-tetrahydrodipicolinate from L-aspartate: step 4/4. Catalyzes the conversion of 4-hydroxy-tetrahydrodipicolinate (HTPA) to tetrahydrodipicolinate. The polypeptide is 4-hydroxy-tetrahydrodipicolinate reductase (Salmonella dublin (strain CT_02021853)).